A 306-amino-acid polypeptide reads, in one-letter code: UDP-3-O-acyl-N-acetylglucosamine deacetylase (306 aa).

3 residues coordinate Zn(2+): histidine 79, histidine 238, and aspartate 242. Catalysis depends on histidine 265, which acts as the Proton donor.

Belongs to the LpxC family. The cofactor is Zn(2+).

It catalyses the reaction a UDP-3-O-[(3R)-3-hydroxyacyl]-N-acetyl-alpha-D-glucosamine + H2O = a UDP-3-O-[(3R)-3-hydroxyacyl]-alpha-D-glucosamine + acetate. It participates in glycolipid biosynthesis; lipid IV(A) biosynthesis; lipid IV(A) from (3R)-3-hydroxytetradecanoyl-[acyl-carrier-protein] and UDP-N-acetyl-alpha-D-glucosamine: step 2/6. Its function is as follows. Catalyzes the hydrolysis of UDP-3-O-myristoyl-N-acetylglucosamine to form UDP-3-O-myristoylglucosamine and acetate, the committed step in lipid A biosynthesis. This chain is UDP-3-O-acyl-N-acetylglucosamine deacetylase, found in Hamiltonella defensa subsp. Acyrthosiphon pisum (strain 5AT).